A 119-amino-acid chain; its full sequence is Large ribosomal subunit protein uL22c (119 aa).

This sequence belongs to the universal ribosomal protein uL22 family. As to quaternary structure, part of the 50S ribosomal subunit.

The protein resides in the plastid. It is found in the chloroplast. Its function is as follows. This protein binds specifically to 23S rRNA. Functionally, the globular domain of the protein is located near the polypeptide exit tunnel on the outside of the subunit, while an extended beta-hairpin is found that lines the wall of the exit tunnel in the center of the 70S ribosome. The protein is Large ribosomal subunit protein uL22c (rpl22) of Angiopteris evecta (Mule's foot fern).